A 209-amino-acid chain; its full sequence is Kunitz trypsin inhibitor 1 (209 aa).

A signal peptide spans 1 to 22; that stretch reads MKATISITTIFLVVALAAPSLA. 2 cysteine pairs are disulfide-bonded: cysteine 63–cysteine 107 and cysteine 154–cysteine 162. Residue asparagine 156 is glycosylated (N-linked (GlcNAc...) asparagine).

The protein belongs to the protease inhibitor I3 (leguminous Kunitz-type inhibitor) family.

Exhibits Kunitz trypsin protease inhibitor activity. This is Kunitz trypsin inhibitor 1 from Arabidopsis thaliana (Mouse-ear cress).